The sequence spans 425 residues: MSYNSNPYNGGQYPPYNTYTRPNYSPNNGSQSNNTVHQYQPPRMPPPSTRPQTDGNSNQIPMENVGHISLSSANSHAYAPPSGPPPNTGANSYGNPNYSGPQLPNTQTQSYNLAGGGNFQYQYSTCQGKRKALLIGINYLNTQNELQGCINDVMSMSQLLIQRYGYKQEDMVIMTDTASNQRAIPTRQNMLDAMRWLVSDAQPNDALFFHYSGHGGQTKDLDGDEVDGYDETIYPLDHQYAGQIIDDEMHEIMVKPLPAGCRLTALFDSCHSGGALDLPFTYSTKGVLKEPNMLKESGMDVLHAGLSYASGDIMGAINNVKNIFTSATNGFNNNALQYSRQVKFSPADVISLSGCKDNQTSADTSVNGFATGALSYAFREVVTQNPQLSYLQLLRGIRQVLSNKYSQLPQLSCSHPLDMNLAMVL.

The disordered stretch occupies residues 1 to 110 (MSYNSNPYNG…PQLPNTQTQS (110 aa)). A compositionally biased stretch (low complexity) spans 13-28 (YPPYNTYTRPNYSPNN). Composition is skewed to polar residues over residues 29–38 (GSQSNNTVHQ) and 88–110 (TGANSYGNPNYSGPQLPNTQTQS). Residues histidine 214 and cysteine 270 contribute to the active site.

It belongs to the peptidase C14B family.

It localises to the cytoplasm. Its subcellular location is the nucleus. In terms of biological role, involved in cell death (apoptosis). The polypeptide is Metacaspase-1 (pca1) (Schizosaccharomyces pombe (strain 972 / ATCC 24843) (Fission yeast)).